A 181-amino-acid polypeptide reads, in one-letter code: Large ribosomal subunit protein uL5 (181 aa).

This sequence belongs to the universal ribosomal protein uL5 family. Part of the 50S ribosomal subunit; part of the 5S rRNA/L5/L18/L25 subcomplex. Contacts the 5S rRNA and the P site tRNA. Forms a bridge to the 30S subunit in the 70S ribosome.

Its function is as follows. This is one of the proteins that bind and probably mediate the attachment of the 5S RNA into the large ribosomal subunit, where it forms part of the central protuberance. In the 70S ribosome it contacts protein S13 of the 30S subunit (bridge B1b), connecting the 2 subunits; this bridge is implicated in subunit movement. Contacts the P site tRNA; the 5S rRNA and some of its associated proteins might help stabilize positioning of ribosome-bound tRNAs. The chain is Large ribosomal subunit protein uL5 from Aster yellows witches'-broom phytoplasma (strain AYWB).